A 458-amino-acid chain; its full sequence is Monomethylamine methyltransferase MtmB1 (458 aa).

Pyl-202 is a non-standard amino acid (pyrrolysine).

Belongs to the monomethylamine methyltransferase family. Can form a complex with MtmC.

The enzyme catalyses Co(I)-[methylamine-specific corrinoid protein] + methylamine + H(+) = methyl-Co(III)-[methylamine-specific corrinoid protein] + NH4(+). Its pathway is one-carbon metabolism; methanogenesis from methylamine. Functionally, catalyzes the transfer of the methyl group from monomethylamine to the corrinoid cofactor of MtmC. The sequence is that of Monomethylamine methyltransferase MtmB1 (mtmB1) from Methanosarcina acetivorans (strain ATCC 35395 / DSM 2834 / JCM 12185 / C2A).